Here is a 776-residue protein sequence, read N- to C-terminus: Meiotic expression up-regulated protein 1/2 (776 aa).

Coiled coils occupy residues Tyr-87–Glu-122, Phe-173–Glu-227, Tyr-265–Glu-307, Lys-362–Ser-430, and Ile-496–Leu-595.

This Schizosaccharomyces pombe (strain 972 / ATCC 24843) (Fission yeast) protein is Meiotic expression up-regulated protein 1/2 (meu1).